The following is a 149-amino-acid chain: Large ribosomal subunit protein uL13 (149 aa).

The protein belongs to the universal ribosomal protein uL13 family. In terms of assembly, part of the 50S ribosomal subunit.

Its function is as follows. This protein is one of the early assembly proteins of the 50S ribosomal subunit, although it is not seen to bind rRNA by itself. It is important during the early stages of 50S assembly. The sequence is that of Large ribosomal subunit protein uL13 from Thermotoga maritima (strain ATCC 43589 / DSM 3109 / JCM 10099 / NBRC 100826 / MSB8).